A 5073-amino-acid polypeptide reads, in one-letter code: Malformin synthetase mlfA (5073 aa).

Residues 194-585 are adenylation 1; it reads ERHATNRPHS…CGRADTQVKL (392 aa). Residues 726–799 enclose the Carrier 1 domain; sequence SRLEQEVQLA…EAASLAEVQE (74 aa). S760 is subject to O-(pantetheine 4'-phosphoryl)serine. A condensation 1 region spans residues 837–1268; the sequence is EDVFPCTTMQ…ALNTLSLLQA (432 aa). Residues 1296-1685 form an adenylation 2 region; it reads DRWVTRHPEG…GRKDTQVKLR (390 aa). The region spanning 1823 to 1900 is the Carrier 2 domain; it reads TPASELERTL…QLAAEVGEPA (78 aa). S1860 is subject to O-(pantetheine 4'-phosphoryl)serine. Disordered regions lie at residues 1901–1930 and 1963–1984; these read GQSA…DGVD and GGSS…SSSK. 2 stretches are compositionally biased toward low complexity: residues 1903 to 1927 and 1965 to 1982; these read SASS…STND and SSSN…SSSS. The condensation 2 stretch occupies residues 2031–2446; the sequence is EDIYPATALQ…AVSCSDTETL (416 aa). The interval 2469–2861 is adenylation 3; it reads SRTPHAPAVC…IGRRDGQLKL (393 aa). The Carrier 3 domain maps to 2997 to 3073; that stretch reads RPKTSQEQEM…QLICHLNSIR (77 aa). Residue S3034 is modified to O-(pantetheine 4'-phosphoryl)serine. 2 condensation regions span residues 3090-3555 and 3576-3995; these read WVAL…TYDQ and DIYP…EQLV. An adenylation 4 region spans residues 4020–4410; that stretch reads HASRQAVCAW…VGRKDNQIKF (391 aa). Residues 4544 to 4620 enclose the Carrier 4 domain; it reads MPSTAAERKM…DLGDQARSPN (77 aa). Residue S4581 is modified to O-(pantetheine 4'-phosphoryl)serine. The segment at 4611-4633 is disordered; sequence DLGDQARSPNADNQRVSTASSAG. The segment covering 4617–4631 has biased composition (polar residues); that stretch reads RSPNADNQRVSTASS. Residues 4657–4991 are condensation 5; the sequence is DVLPTTSFQR…LQTIVQHQNN (335 aa).

It belongs to the NRP synthetase family.

Its pathway is secondary metabolite biosynthesis. Functionally, nonribosomal peptide synthetase; part of the gene cluster that mediates the biosynthesis of malformins, cyclic pentapeptides with a disulfide bond between 2 consecutive cysteins, that show potential anti-tumor as well as antimalarial and antitrypanosomal properties. The nonribosomal peptide synthetase mlfA is responsible of the formation of the cyclic pentapeptide. The malformin biosynthesis clusters in malformin-producing fungi also contain enzymes involved in the formation of the disulfide bond between the two consecutive cysteins within malformins, in addition to additional tailoring enzymes such as methyltransferases or oxidoreductases. They are also composed of up to 4 major facilitator superfamily transporters, and transcription factors probably involved in the regulation of the expression of those clusters. This chain is Malformin synthetase mlfA, found in Aspergillus tubingensis (strain CBS 134.48).